A 227-amino-acid polypeptide reads, in one-letter code: Izumo sperm-egg fusion protein 4 (227 aa).

The N-terminal stretch at 1–24 (MFGQGRLGQAMALLLFLGMTAALA) is a signal peptide. N-linked (GlcNAc...) asparagine glycans are attached at residues Asn153 and Asn214.

It belongs to the Izumo family.

Its subcellular location is the secreted. The polypeptide is Izumo sperm-egg fusion protein 4 (Izumo4) (Mus musculus (Mouse)).